The chain runs to 564 residues: Probable diguanylate cyclase DgcQ (564 aa).

Helical transmembrane passes span 20 to 40 (LGPG…STLL) and 360 to 380 (IALT…WYVI). In terms of domain architecture, GGDEF spans 428 to 563 (HPFSVIQVDL…GRNRVFASDN (136 aa)). Aspartate 436 is a binding site for Mg(2+). Substrate contacts are provided by asparagine 444, histidine 449, and aspartate 453. A Mg(2+)-binding site is contributed by glutamate 479. Glutamate 479 serves as the catalytic Proton acceptor.

As to quaternary structure, homodimer. Mg(2+) is required as a cofactor.

Its subcellular location is the cell inner membrane. The enzyme catalyses 2 GTP = 3',3'-c-di-GMP + 2 diphosphate. The protein operates within glycan metabolism; bacterial cellulose biosynthesis. It participates in purine metabolism; 3',5'-cyclic di-GMP biosynthesis. Its function is as follows. Catalyzes the synthesis of cyclic-di-GMP (c-di-GMP) via the condensation of 2 GTP molecules. Cyclic-di-GMP is a second messenger which controls cell surface-associated traits in bacteria. Involved in the regulation of cellulose production. This is Probable diguanylate cyclase DgcQ from Shigella dysenteriae serotype 1 (strain Sd197).